Reading from the N-terminus, the 389-residue chain is MSRVFKKTCSNGKLSIYLGKRDFVDHVDMVEPIDGVVLVDPEYLKGRKMFVMLTCAFRYGHDDLDVIGLTFRKDLYVQVQQVVPAESSSPRGSLTVLQERLLHKLGDNAYPFTLQMVVNLPCSVTLQPGPDDTGKACGVDFEVKSFCAENLEEKVSKRDSVRLVIRKIQFAPLEPGPGPWARLCRRFLLSAQPLLLQAWMDKEVNYHGQPISVNVSINNSTNKVIKKIKISVDQITDVVLYSLDKYTKTVFVQEFTETIAANSTFSKSFAVTPLLADNCHKQGLALDGKLKQGDTNLASSTILRPGVDKELLGILVSYKVRVNLMVSCEGILGDLTASEVGVELPLILMHPKPSNEAASSEDIVIEEFAQQEPSGESQEALAAEGNEGS.

Residues 369–389 form a disordered region; sequence AQQEPSGESQEALAAEGNEGS.

It belongs to the arrestin family. As to quaternary structure, homodimer; disulfide-linked in response to retinal illumination. Interacts with CXCR4; the interaction is dependent on the C-terminal phosphorylation of CXCR4 and modulates the calcium ion mobilization activity of CXCR4. Interacts with GPR84. In terms of tissue distribution, expressed in cone photoreceptors in the retina (at protein level).

The protein localises to the photoreceptor inner segment. It localises to the cell projection. The protein resides in the cilium. Its subcellular location is the photoreceptor outer segment. In terms of biological role, may play a role in an as yet undefined retina-specific signal transduction. Could bind to photoactivated-phosphorylated red/green opsins. In Bos taurus (Bovine), this protein is Arrestin-C (ARR3).